Here is a 214-residue protein sequence, read N- to C-terminus: Dephospho-CoA kinase (214 aa).

Residues 20–214 (RIGITGGIAS…KLQLKKLYKF (195 aa)) enclose the DPCK domain. 28–33 (ASGKTI) contributes to the ATP binding site.

The protein belongs to the CoaE family.

It is found in the cytoplasm. The catalysed reaction is 3'-dephospho-CoA + ATP = ADP + CoA + H(+). It functions in the pathway cofactor biosynthesis; coenzyme A biosynthesis; CoA from (R)-pantothenate: step 5/5. Functionally, catalyzes the phosphorylation of the 3'-hydroxyl group of dephosphocoenzyme A to form coenzyme A. This is Dephospho-CoA kinase from Prochlorococcus marinus (strain NATL2A).